We begin with the raw amino-acid sequence, 150 residues long: Peptidoglycan-associated lipoprotein (150 aa).

A signal peptide spans methionine 1–alanine 19. Cysteine 20 carries N-palmitoyl cysteine lipidation. Cysteine 20 carries S-diacylglycerol cysteine lipidation. The region spanning serine 37–tyrosine 150 is the OmpA-like domain.

Belongs to the Pal lipoprotein family. In terms of assembly, the Tol-Pal system is composed of five core proteins: the inner membrane proteins TolA, TolQ and TolR, the periplasmic protein TolB and the outer membrane protein Pal. They form a network linking the inner and outer membranes and the peptidoglycan layer.

The protein resides in the cell outer membrane. Functionally, part of the Tol-Pal system, which plays a role in outer membrane invagination during cell division and is important for maintaining outer membrane integrity. The sequence is that of Peptidoglycan-associated lipoprotein from Pasteurella multocida (strain Pm70).